Here is a 231-residue protein sequence, read N- to C-terminus: AA9 family lytic polysaccharide monooxygenase C (231 aa).

Residues 1-18 (MKSGLLFTTASLALTASA) form the signal peptide. A Cu(2+)-binding site is contributed by histidine 19. A disulfide bridge connects residues cysteine 60 and cysteine 179. N-linked (GlcNAc...) asparagine glycans are attached at residues asparagine 69 and asparagine 143. Positions 165 and 174 each coordinate O2. Cu(2+) is bound at residue tyrosine 176.

The protein belongs to the polysaccharide monooxygenase AA9 family. Requires Cu(2+) as cofactor.

The protein localises to the secreted. It catalyses the reaction [(1-&gt;4)-beta-D-glucosyl]n+m + reduced acceptor + O2 = 4-dehydro-beta-D-glucosyl-[(1-&gt;4)-beta-D-glucosyl]n-1 + [(1-&gt;4)-beta-D-glucosyl]m + acceptor + H2O.. Lytic polysaccharide monooxygenase (LPMO) that depolymerizes crystalline and amorphous polysaccharides via the oxidation of scissile alpha- or beta-(1-4)-glycosidic bonds, yielding C1 oxidation products. Catalysis by LPMOs requires the reduction of the active-site copper from Cu(II) to Cu(I) by a reducing agent and H(2)O(2) or O(2) as a cosubstrate. The sequence is that of AA9 family lytic polysaccharide monooxygenase C from Emericella nidulans (strain FGSC A4 / ATCC 38163 / CBS 112.46 / NRRL 194 / M139) (Aspergillus nidulans).